Here is a 457-residue protein sequence, read N- to C-terminus: Putative adhesion G protein-coupled receptor E4P (457 aa).

Residues 1–14 form the signal peptide; the sequence is MGSRFLLVLLSGAS. 6 disulfides stabilise this stretch: cysteine 15–cysteine 24, cysteine 18–cysteine 30, cysteine 32–cysteine 52, cysteine 58–cysteine 71, cysteine 65–cysteine 80, and cysteine 82–cysteine 103. An EGF-like 1 domain is found at 15 to 53; that stretch reads CPPCPKYASCHNSTHCTCEDGFRARSGRTYFHDSSEKCE. Residues 16-191 lie on the Extracellular side of the membrane; sequence PPCPKYASCH…LAPKEDPVLT (176 aa). Asparagine 26 carries N-linked (GlcNAc...) asparagine glycosylation. Positions 54–104 constitute an EGF-like 2; calcium-binding domain; the sequence is DINECETGLAKCKYKAYCRNKVGGYICSCLVKYTLFNFLAGIIDYDHPDCY. N-linked (GlcNAc...) asparagine glycans are attached at residues asparagine 106 and asparagine 162. The GAIN-B domain maps to 134 to 186; it reads DKRTKHICVYWEGSEGGWSTEGCSHVHSNGSYTKCKCFHLSSFAVLVALAPKE. 2 cysteine pairs are disulfide-bonded: cysteine 141/cysteine 168 and cysteine 156/cysteine 170. Residues 141–186 form a GPS region; the sequence is CVYWEGSEGGWSTEGCSHVHSNGSYTKCKCFHLSSFAVLVALAPKE. A helical membrane pass occupies residues 192–212; sequence VITQVGLTISLLCLFLAILTF. The Cytoplasmic portion of the chain corresponds to 213–223; sequence LLCRPIQNTST. The helical transmembrane segment at 224 to 244 threads the bilayer; that stretch reads SLHLELSLCLFLAHLLFLTGI. Residue asparagine 245 is glycosylated (N-linked (GlcNAc...) asparagine). Residues 245–250 are Extracellular-facing; it reads NRTEPE. Residues 251-271 traverse the membrane as a helical segment; sequence VLCSIIAGLLHFLYLACFTWM. Topologically, residues 272 to 299 are cytoplasmic; the sequence is LLEGLHLFLTVRNLKVANYTSTGRFKKR. A helical membrane pass occupies residues 300 to 320; sequence FMYPVGYGIPAVIIAVSAIVG. Residues 321-336 lie on the Extracellular side of the membrane; that stretch reads PQNYGTFTCWLKLDKG. The chain crosses the membrane as a helical span at residues 337-357; that stretch reads FIWSFMGPVAVIILINLVFYF. Residues 358-384 are Cytoplasmic-facing; the sequence is QVLWILRSKLSSLNKEVSTIQDTRVMT. Residues 385-405 traverse the membrane as a helical segment; it reads FKAISQLFILGCSWGLGFFMV. Topologically, residues 406–413 are extracellular; the sequence is EEVGKTIG. A helical membrane pass occupies residues 414–434; sequence SIIAYSFTIINTLQGVLLFVV. Over 435–457 the chain is Cytoplasmic; the sequence is HCLLNRQVRLIILSVISLVPKSN.

The protein belongs to the G-protein coupled receptor 2 family. Adhesion G-protein coupled receptor (ADGR) subfamily. As to quaternary structure, forms a heterodimer, consisting of a large extracellular region (alpha subunit) non-covalently linked to a seven-transmembrane moiety (beta subunit). Post-translationally, glycosylated. In terms of processing, proteolytically cleaved into 2 subunits, an extracellular alpha subunit and a seven-transmembrane subunit.

The protein localises to the cell membrane. It localises to the secreted. May mediate the cellular interaction between myeloid cells and B-cells. This chain is Putative adhesion G protein-coupled receptor E4P, found in Homo sapiens (Human).